Reading from the N-terminus, the 95-residue chain is Co-chaperonin GroES (95 aa).

Belongs to the GroES chaperonin family. In terms of assembly, heptamer of 7 subunits arranged in a ring. Interacts with the chaperonin GroEL.

It is found in the cytoplasm. Its function is as follows. Together with the chaperonin GroEL, plays an essential role in assisting protein folding. The GroEL-GroES system forms a nano-cage that allows encapsulation of the non-native substrate proteins and provides a physical environment optimized to promote and accelerate protein folding. GroES binds to the apical surface of the GroEL ring, thereby capping the opening of the GroEL channel. The polypeptide is Co-chaperonin GroES (Chlorobaculum tepidum (strain ATCC 49652 / DSM 12025 / NBRC 103806 / TLS) (Chlorobium tepidum)).